We begin with the raw amino-acid sequence, 396 residues long: MDKTTQVNQKTGLLSQPKAVWAVAFACVISFMGIGLVDPILPAIAAQLHASPSEVSLLFTSYLLVTGFMMFFSGAISSRIGAKWTLILGLIFIIVFAGLGGSSSSIAQLVGYRGGWGLGNALFISTALAVIVGVSVGGSAQAIILYEAALGLGISVGPLAGGELGSISWRAPFFGVSVLMFIALIAISFMLPKLPKPAKRVGVFDAMKALKYKGLLTMAVSAFLYNFGFFILLAYSPFVLDLDEHGLGYVFFGWGLLLAITSVFTAPLVHKALGTVRSLVVLFIAFAAILVIMGIWTDHQTLIITCIVVAGAVLGMVNTIMTTAVMGSAPVERSIASSAYSSVRFIGGALAPWIAGMLSEHFTASTPYTVGGIVVFVGMLVLLMGRKHLAGIKAGH.

12 helical membrane passes run 20-40 (VWAVAFACVISFMGIGLVDPI), 56-76 (SLLFTSYLLVTGFMMFFSGAI), 80-100 (IGAKWTLILGLIFIIVFAGLG), 114-134 (GGWGLGNALFISTALAVIVGV), 142-162 (AIILYEAALGLGISVGPLAGG), 171-191 (APFFGVSVLMFIALIAISFML), 214-234 (GLLTMAVSAFLYNFGFFILLA), 249-269 (YVFFGWGLLLAITSVFTAPLV), 278-298 (SLVVLFIAFAAILVIMGIWTD), 301-321 (TLIITCIVVAGAVLGMVNTIM), 339-359 (AYSSVRFIGGALAPWIAGMLS), and 364-384 (ASTPYTVGGIVVFVGMLVLLM).

The protein belongs to the major facilitator superfamily.

The protein resides in the cell membrane. Its function is as follows. Acts to efflux copper or a copper complex. It is possible that YfmO could contribute to copper resistance. The protein is Multidrug efflux protein YfmO (yfmO) of Bacillus subtilis (strain 168).